A 984-amino-acid chain; its full sequence is Protein translocase subunit SecA (984 aa).

Residues glutamine 96, 114 to 118 (GEGKT), and aspartate 595 contribute to the ATP site. Basic and acidic residues-rich tracts occupy residues 930–942 (EHEEEKKHQRLLE) and 952–971 (KSDKKPRPKTLKERLKEERL). The interval 930 to 984 (EHEEEKKHQRLLEEAELQGVQGKSDKKPRPKTLKERLKEERLRKRKLKAKKKEQE) is disordered. Residues 972–984 (RKRKLKAKKKEQE) are compositionally biased toward basic residues.

The protein belongs to the SecA family. As to quaternary structure, monomer and homodimer. Part of the essential Sec protein translocation apparatus which comprises SecA, SecYEG and auxiliary proteins SecDF. Other proteins may also be involved.

Its subcellular location is the cell inner membrane. It localises to the cytoplasm. It catalyses the reaction ATP + H2O + cellular proteinSide 1 = ADP + phosphate + cellular proteinSide 2.. Part of the Sec protein translocase complex. Interacts with the SecYEG preprotein conducting channel. Has a central role in coupling the hydrolysis of ATP to the transfer of proteins into and across the cell membrane, serving as an ATP-driven molecular motor driving the stepwise translocation of polypeptide chains across the membrane. The sequence is that of Protein translocase subunit SecA from Aquifex aeolicus (strain VF5).